The following is a 215-amino-acid chain: MRIILLGAPGAGKGTQAQFIMDKFGIPQISTGDMLRAAIIKAGTEMGKQAKSVIDAGQLVSDEIILGLVKERIAQEDCAKGFLLDGFPRTIPQADGLKENGVSIDYVLEFDVADEVIVERMSGRRAHLPSGRTYHVTFNPSKVEGQDDVTGEPLVIREDDKPETVLARLGVYHEQTAPLIAYYTKEAEAGKTEYLKFDGTKLVAEVSAEIEKVLS.

10 to 15 (GAGKGT) contacts ATP. Residues 30 to 60 (STGDMLRAAIIKAGTEMGKQAKSVIDAGQLV) are NMP. Residues threonine 31, arginine 36, 58 to 60 (QLV), 86 to 89 (GFPR), and glutamine 93 contribute to the AMP site. The tract at residues 123 to 160 (GRRAHLPSGRTYHVTFNPSKVEGQDDVTGEPLVIREDD) is LID. ATP is bound by residues arginine 124 and 133 to 134 (TY). Positions 157 and 168 each coordinate AMP. Lysine 201 contributes to the ATP binding site.

Belongs to the adenylate kinase family. As to quaternary structure, monomer.

Its subcellular location is the cytoplasm. The catalysed reaction is AMP + ATP = 2 ADP. Its pathway is purine metabolism; AMP biosynthesis via salvage pathway; AMP from ADP: step 1/1. Functionally, catalyzes the reversible transfer of the terminal phosphate group between ATP and AMP. Plays an important role in cellular energy homeostasis and in adenine nucleotide metabolism. This chain is Adenylate kinase, found in Aliivibrio salmonicida (strain LFI1238) (Vibrio salmonicida (strain LFI1238)).